We begin with the raw amino-acid sequence, 851 residues long: Meiotically up-regulated gene 87 protein (851 aa).

The protein belongs to the nucleoporin interacting component (NIC) family.

The protein localises to the nucleus envelope. Has a role in meiosis. This chain is Meiotically up-regulated gene 87 protein (mug87), found in Schizosaccharomyces pombe (strain 972 / ATCC 24843) (Fission yeast).